Reading from the N-terminus, the 335-residue chain is GTPase Obg (335 aa).

The 158-residue stretch at M1–I158 folds into the Obg domain. The segment at N126–P145 is disordered. Residues A159 to A334 enclose the OBG-type G domain. Residues G165–S172, F190–A194, D215–G218, N285–D288, and S315–L317 each bind GTP. S172 and T192 together coordinate Mg(2+).

It belongs to the TRAFAC class OBG-HflX-like GTPase superfamily. OBG GTPase family. In terms of assembly, monomer. The cofactor is Mg(2+).

Its subcellular location is the cytoplasm. Functionally, an essential GTPase which binds GTP, GDP and possibly (p)ppGpp with moderate affinity, with high nucleotide exchange rates and a fairly low GTP hydrolysis rate. Plays a role in control of the cell cycle, stress response, ribosome biogenesis and in those bacteria that undergo differentiation, in morphogenesis control. The protein is GTPase Obg of Chlamydia pneumoniae (Chlamydophila pneumoniae).